Here is a 200-residue protein sequence, read N- to C-terminus: Protein Rv0461 (200 aa).

The tract at residues 47–67 (DRAGKSWPGSTPKPQEDPVGV) is disordered. The next 3 helical transmembrane spans lie at 102–122 (FVLV…SLFY), 134–154 (VFVV…LALV), and 159–179 (LITA…AAAA).

The protein resides in the cell membrane. This is Protein Rv0461 from Mycobacterium tuberculosis (strain ATCC 25618 / H37Rv).